We begin with the raw amino-acid sequence, 463 residues long: MNMQEDKSIIEVSHVSKFFGDKTALDDVTLNVKKGEFVTILGPSGCGKTTLLRLIAGFQTASEGEIRISGKEITQTPPHKRPVNTVFQKYALFPHLNVYDNIAFGLKLKKTPKQTIGKKVKAALKMVGMTDYEYRDVDSLSGGQQQRVAIARAIVNEPEVLLLDEPLAALDLKMRKDMQMELKEMHKSLGITFVYVTHDQEEALTLSDTIVVMSEGKIQQIGTPIDIYNEPINSFVADFIGESNILNGTMIHDKLVRFCGTEFECVDEGFGENTPVDVVIRPEDLYIFPVSEMAQLTGVVQTSIFKGVHYEMTVLCGGYEFLVQDYHHFEVGAEVGLLVKPFDIHIMKKERVCNTFEGKLQDATHVEFLGCTFECASVEGLESGTDVKVEVDFDKVILQDNEEDGTLTGEVKFILYKGDHYHLTVWSDWDENVFVDTNDVWDDGDRVGITIPPDAIRVIKITD.

One can recognise an ABC transporter domain in the interval 10 to 240 (IEVSHVSKFF…PINSFVADFI (231 aa)). 42–49 (GPSGCGKT) contributes to the ATP binding site.

This sequence belongs to the ABC transporter superfamily. Spermidine/putrescine importer (TC 3.A.1.11.1) family. As to quaternary structure, the complex is composed of two ATP-binding proteins (PotA), two transmembrane proteins (PotB and PotC) and a solute-binding protein (PotD).

The protein localises to the cell inner membrane. It carries out the reaction ATP + H2O + polyamine-[polyamine-binding protein]Side 1 = ADP + phosphate + polyamineSide 2 + [polyamine-binding protein]Side 1.. Its function is as follows. Part of the ABC transporter complex PotABCD involved in spermidine/putrescine import. Responsible for energy coupling to the transport system. This chain is Spermidine/putrescine import ATP-binding protein PotA, found in Bacteroides thetaiotaomicron (strain ATCC 29148 / DSM 2079 / JCM 5827 / CCUG 10774 / NCTC 10582 / VPI-5482 / E50).